We begin with the raw amino-acid sequence, 215 residues long: Pyrrolidone-carboxylate peptidase (215 aa).

Active-site residues include Glu78, Cys141, and His165.

This sequence belongs to the peptidase C15 family. As to quaternary structure, homotetramer.

It is found in the cytoplasm. The enzyme catalyses Release of an N-terminal pyroglutamyl group from a polypeptide, the second amino acid generally not being Pro.. Functionally, removes 5-oxoproline from various penultimate amino acid residues except L-proline. The chain is Pyrrolidone-carboxylate peptidase from Lacticaseibacillus paracasei (strain ATCC 334 / BCRC 17002 / CCUG 31169 / CIP 107868 / KCTC 3260 / NRRL B-441) (Lactobacillus paracasei).